Here is a 223-residue protein sequence, read N- to C-terminus: Cytochrome c biogenesis ATP-binding export protein CcmA (223 aa).

The 223-residue stretch at 1-223 (MRSLACERDE…KSDMAVGNDY (223 aa)) folds into the ABC transporter domain. 31–38 (GSNGAGKT) is a binding site for ATP.

Belongs to the ABC transporter superfamily. CcmA exporter (TC 3.A.1.107) family. As to quaternary structure, the complex is composed of two ATP-binding proteins (CcmA) and two transmembrane proteins (CcmB).

Its subcellular location is the cell inner membrane. It carries out the reaction heme b(in) + ATP + H2O = heme b(out) + ADP + phosphate + H(+). Part of the ABC transporter complex CcmAB involved in the biogenesis of c-type cytochromes; once thought to export heme, this seems not to be the case, but its exact role is uncertain. Responsible for energy coupling to the transport system. This chain is Cytochrome c biogenesis ATP-binding export protein CcmA, found in Saccharophagus degradans (strain 2-40 / ATCC 43961 / DSM 17024).